The chain runs to 289 residues: CRISPR system Cms protein Csm4 (289 aa).

The protein belongs to the CRISPR-associated Csm4 family. Probably part of the Csm effector complex, that includes Cas10, Csm2, Csm3, Csm4, Csm5 and mature crRNA. Interacts with Cas10 (csm1).

CRISPR (clustered regularly interspaced short palindromic repeat) is an adaptive immune system that provides protection against mobile genetic elements (viruses, transposable elements and conjugative plasmids). CRISPR clusters contain spacers, sequences complementary to antecedent mobile elements, and target invading nucleic acids. CRISPR clusters are transcribed and processed into CRISPR RNA (crRNA). The type III-A Csm effector complex binds crRNA and acts as a crRNA-guided RNase, DNase and cyclic oligoadenylate synthase; binding of target RNA cognate to the crRNA is required for all activities. In terms of biological role, the subunit probably binds to the 5' handle of the crRNA, helping in discrimination between self- and non-self. This chain is CRISPR system Cms protein Csm4, found in Thermococcus onnurineus (strain NA1).